We begin with the raw amino-acid sequence, 259 residues long: Deoxyribose-phosphate aldolase (259 aa).

Asp102 serves as the catalytic Proton donor/acceptor. Catalysis depends on Lys167, which acts as the Schiff-base intermediate with acetaldehyde. The active-site Proton donor/acceptor is the Lys201.

This sequence belongs to the DeoC/FbaB aldolase family. DeoC type 2 subfamily.

Its subcellular location is the cytoplasm. It carries out the reaction 2-deoxy-D-ribose 5-phosphate = D-glyceraldehyde 3-phosphate + acetaldehyde. Its pathway is carbohydrate degradation; 2-deoxy-D-ribose 1-phosphate degradation; D-glyceraldehyde 3-phosphate and acetaldehyde from 2-deoxy-alpha-D-ribose 1-phosphate: step 2/2. Catalyzes a reversible aldol reaction between acetaldehyde and D-glyceraldehyde 3-phosphate to generate 2-deoxy-D-ribose 5-phosphate. In Shigella flexneri, this protein is Deoxyribose-phosphate aldolase.